The sequence spans 242 residues: Uridylate kinase (242 aa).

16 to 19 provides a ligand contact to ATP; sequence KVSG. UMP is bound at residue Gly58. Positions 59 and 63 each coordinate ATP. UMP-binding positions include Asp78 and 139 to 146; that span reads TGNPFCTT. Residues Thr166, Gln167, Tyr172, and Asp175 each coordinate ATP.

The protein belongs to the UMP kinase family. Homohexamer.

The protein resides in the cytoplasm. It carries out the reaction UMP + ATP = UDP + ADP. The protein operates within pyrimidine metabolism; CTP biosynthesis via de novo pathway; UDP from UMP (UMPK route): step 1/1. Inhibited by UTP. Its function is as follows. Catalyzes the reversible phosphorylation of UMP to UDP. The chain is Uridylate kinase from Rickettsia conorii (strain ATCC VR-613 / Malish 7).